The primary structure comprises 104 residues: MRFFSYLGLLLAGLASLQGFSTDNPLEEELRCWCLYVKNCRFCWACQDGLCKNKVLKDMPPVQEHSYPMEYCMLHRQCKYITDGPIFQVECTMQTCDAIRLLNA.

The first 19 residues, M1–G19, serve as a signal peptide directing secretion.

This sequence belongs to the asfivirus MGF 110 family.

Functionally, plays a role in virus cell tropism, and may be required for efficient virus replication in macrophages. In African swine fever virus (isolate Tick/South Africa/Pretoriuskop Pr4/1996) (ASFV), this protein is Protein MGF 110-2L.